Reading from the N-terminus, the 1049-residue chain is Dyslexia-associated protein KIAA0319-like protein (1049 aa).

Over Met1–Arg29 the chain is Cytoplasmic. The chain crosses the membrane as a helical span at residues Thr30–Ser50. The MANSC domain occupies Ala49–Met127. Over Glu51 to Tyr932 the chain is Extracellular. The segment at Thr234–Val277 is disordered. N-linked (GlcNAc...) asparagine glycosylation is found at Asn247, Asn395, and Asn487. PKD domains are found at residues Val310–Glu401, Ile409–Ala498, Val504–Glu594, Gln600–Glu688, and Ile694–Asp785. A helical membrane pass occupies residues Val933–Cys953. Residues Cys954–Leu1049 are Cytoplasmic-facing. Phosphothreonine is present on Thr974. Residues Ser978, Ser1009, and Ser1031 each carry the phosphoserine modification. The tract at residues Gly1022 to Leu1049 is disordered. Over residues Gln1028–Thr1037 the composition is skewed to polar residues. The residue at position 1037 (Thr1037) is a Phosphothreonine.

Interacts with RTN4R. N-glycosylated.

Its subcellular location is the cytoplasmic granule membrane. The protein resides in the golgi apparatus membrane. The protein localises to the golgi apparatus. It localises to the trans-Golgi network membrane. It is found in the cell membrane. In terms of biological role, possible role in axon guidance through interaction with RTN4R. This is Dyslexia-associated protein KIAA0319-like protein from Pongo abelii (Sumatran orangutan).